The following is a 294-amino-acid chain: 4-hydroxy-tetrahydrodipicolinate synthase (294 aa).

Thr-47 serves as a coordination point for pyruvate. The Proton donor/acceptor role is filled by Tyr-135. Lys-163 acts as the Schiff-base intermediate with substrate in catalysis. Residue Ile-205 participates in pyruvate binding.

It belongs to the DapA family. In terms of assembly, homotetramer; dimer of dimers.

Its subcellular location is the cytoplasm. It catalyses the reaction L-aspartate 4-semialdehyde + pyruvate = (2S,4S)-4-hydroxy-2,3,4,5-tetrahydrodipicolinate + H2O + H(+). It participates in amino-acid biosynthesis; L-lysine biosynthesis via DAP pathway; (S)-tetrahydrodipicolinate from L-aspartate: step 3/4. Catalyzes the condensation of (S)-aspartate-beta-semialdehyde [(S)-ASA] and pyruvate to 4-hydroxy-tetrahydrodipicolinate (HTPA). This is 4-hydroxy-tetrahydrodipicolinate synthase from Rickettsia typhi (strain ATCC VR-144 / Wilmington).